The primary structure comprises 134 residues: Peroxisomal testis-specific protein 1 (134 aa).

A Microbody targeting signal motif is present at residues 131-134; that stretch reads NHLL.

The protein resides in the peroxisome. In Homo sapiens (Human), this protein is Peroxisomal testis-specific protein 1 (PXT1).